The primary structure comprises 298 residues: Probable tRNA(His) guanylyltransferase (298 aa).

Mg(2+) is bound by residues Asp58, Gly59, and Asp105. GTP-binding positions include 58–63 and 104–105; these read DGRNFH and SD.

Belongs to the tRNA(His) guanylyltransferase family. In terms of assembly, homotetramer. Interacts with MFN1 and MFN2; functions as a guanyl-nucleotide exchange factor/GEF for MFN2 and also probably MFN1. Mg(2+) serves as cofactor.

The protein localises to the cytoplasm. Its subcellular location is the mitochondrion. It carries out the reaction a 5'-end ribonucleotide-tRNA(His) + GTP + ATP + H2O = a 5'-end phospho-guanosine-ribonucleotide-tRNA(His) + AMP + 2 diphosphate + H(+). Functionally, adds a GMP to the 5'-end of tRNA(His) after transcription and RNase P cleavage. This step is essential for proper recognition of the tRNA and for the fidelity of protein synthesis. Also functions as a guanyl-nucleotide exchange factor/GEF for the MFN1 and MFN2 mitofusins thereby regulating mitochondrial fusion. By regulating both mitochondrial dynamics and bioenergetic function, it contributes to cell survival following oxidative stress. This chain is Probable tRNA(His) guanylyltransferase (Thg1l), found in Mus musculus (Mouse).